The primary structure comprises 344 residues: Late embryogenesis abundant protein 17 (344 aa).

2 disordered regions span residues 1-20 (MASRQDRREARAEADARRAA) and 116-258 (KDYT…QGQG). A coiled-coil region spans residues 3–52 (SRQDRREARAEADARRAAEEIARARDERVMQAEVDARSAADEIARARADR). Composition is skewed to basic and acidic residues over residues 116–163 (KDYT…KDAV), 172–230 (EATK…DATK), and 238–252 (DKARETAATHDDATD).

Belongs to the LEA type 4 family. As to expression, expressed in embryos.

The protein resides in the nucleus. Involved in abiotic stress responses. May function as chaperone and contribute to prevent the formation of damaging protein aggregates. The chain is Late embryogenesis abundant protein 17 from Oryza sativa subsp. japonica (Rice).